The sequence spans 491 residues: Bifunctional protein HldE (491 aa).

The interval 1 to 330 is ribokinase; the sequence is MDRKMVESLF…AAVSLEHRDS (330 aa). 205 to 208 provides a ligand contact to ATP; that stretch reads NRKE. D275 is an active-site residue. Residues 356–491 form a cytidylyltransferase region; the sequence is FTNGCFDLLH…KVLERYTDEQ (136 aa).

The protein in the N-terminal section; belongs to the carbohydrate kinase PfkB family. This sequence in the C-terminal section; belongs to the cytidylyltransferase family. Homodimer.

It carries out the reaction D-glycero-beta-D-manno-heptose 7-phosphate + ATP = D-glycero-beta-D-manno-heptose 1,7-bisphosphate + ADP + H(+). The catalysed reaction is D-glycero-beta-D-manno-heptose 1-phosphate + ATP + H(+) = ADP-D-glycero-beta-D-manno-heptose + diphosphate. Its pathway is nucleotide-sugar biosynthesis; ADP-L-glycero-beta-D-manno-heptose biosynthesis; ADP-L-glycero-beta-D-manno-heptose from D-glycero-beta-D-manno-heptose 7-phosphate: step 1/4. It participates in nucleotide-sugar biosynthesis; ADP-L-glycero-beta-D-manno-heptose biosynthesis; ADP-L-glycero-beta-D-manno-heptose from D-glycero-beta-D-manno-heptose 7-phosphate: step 3/4. In terms of biological role, catalyzes the phosphorylation of D-glycero-D-manno-heptose 7-phosphate at the C-1 position to selectively form D-glycero-beta-D-manno-heptose-1,7-bisphosphate. Its function is as follows. Catalyzes the ADP transfer from ATP to D-glycero-beta-D-manno-heptose 1-phosphate, yielding ADP-D-glycero-beta-D-manno-heptose. The sequence is that of Bifunctional protein HldE from Trichlorobacter lovleyi (strain ATCC BAA-1151 / DSM 17278 / SZ) (Geobacter lovleyi).